Reading from the N-terminus, the 207-residue chain is Guanylate kinase (207 aa).

Positions 5–184 constitute a Guanylate kinase-like domain; sequence GNLFIVSAPS…ALADLRAIIR (180 aa). 12-19 provides a ligand contact to ATP; that stretch reads APSGAGKS.

Belongs to the guanylate kinase family.

It is found in the cytoplasm. It carries out the reaction GMP + ATP = GDP + ADP. In terms of biological role, essential for recycling GMP and indirectly, cGMP. This is Guanylate kinase from Shewanella sp. (strain MR-7).